The chain runs to 139 residues: Large ribosomal subunit protein mL42 (139 aa).

Residues 1 to 32 constitute a mitochondrion transit peptide; sequence MAVAAVKWVMSKRTILKHLFPVQNGALYCVCH.

Belongs to the mitochondrion-specific ribosomal protein mL42 family. As to quaternary structure, component of the mitochondrial ribosome large subunit (39S) which comprises a 16S rRNA and about 50 distinct proteins. Component of the mitochondrial ribosome small subunit (28S) which comprises a 12S rRNA and about 30 distinct proteins.

It localises to the mitochondrion. The protein is Large ribosomal subunit protein mL42 (MRPL42) of Pongo abelii (Sumatran orangutan).